The primary structure comprises 736 residues: Phosphoribosylformylglycinamidine synthase subunit PurL (736 aa).

The active site involves His-48. ATP-binding residues include Tyr-51 and Lys-90. A Mg(2+)-binding site is contributed by Glu-92. Substrate-binding positions include 93 to 96 and Arg-115; that span reads SHNH. Catalysis depends on His-94, which acts as the Proton acceptor. Position 116 (Asp-116) interacts with Mg(2+). Residue Gln-239 coordinates substrate. Asp-267 serves as a coordination point for Mg(2+). Residue 311-313 coordinates substrate; sequence ESQ. Residues Asp-492 and Gly-529 each contribute to the ATP site. Asn-530 contributes to the Mg(2+) binding site. Ser-532 lines the substrate pocket.

This sequence belongs to the FGAMS family. In terms of assembly, monomer. Part of the FGAM synthase complex composed of 1 PurL, 1 PurQ and 2 PurS subunits.

It localises to the cytoplasm. The catalysed reaction is N(2)-formyl-N(1)-(5-phospho-beta-D-ribosyl)glycinamide + L-glutamine + ATP + H2O = 2-formamido-N(1)-(5-O-phospho-beta-D-ribosyl)acetamidine + L-glutamate + ADP + phosphate + H(+). Its pathway is purine metabolism; IMP biosynthesis via de novo pathway; 5-amino-1-(5-phospho-D-ribosyl)imidazole from N(2)-formyl-N(1)-(5-phospho-D-ribosyl)glycinamide: step 1/2. Its function is as follows. Part of the phosphoribosylformylglycinamidine synthase complex involved in the purines biosynthetic pathway. Catalyzes the ATP-dependent conversion of formylglycinamide ribonucleotide (FGAR) and glutamine to yield formylglycinamidine ribonucleotide (FGAM) and glutamate. The FGAM synthase complex is composed of three subunits. PurQ produces an ammonia molecule by converting glutamine to glutamate. PurL transfers the ammonia molecule to FGAR to form FGAM in an ATP-dependent manner. PurS interacts with PurQ and PurL and is thought to assist in the transfer of the ammonia molecule from PurQ to PurL. The polypeptide is Phosphoribosylformylglycinamidine synthase subunit PurL (Bradyrhizobium diazoefficiens (strain JCM 10833 / BCRC 13528 / IAM 13628 / NBRC 14792 / USDA 110)).